A 117-amino-acid chain; its full sequence is Venom protein TxLP11 (117 aa).

The N-terminal stretch at 1–22 (MNTKTLIVVFLVCLLVSEVVLA) is a signal peptide.

In terms of processing, contains 4 disulfide bonds. Expressed by the venom gland.

It localises to the secreted. The sequence is that of Venom protein TxLP11 from Lychas mucronatus (Chinese swimming scorpion).